We begin with the raw amino-acid sequence, 270 residues long: NAD kinase (270 aa).

Catalysis depends on D49, which acts as the Proton acceptor. NAD(+) contacts are provided by residues 49 to 50 (DG), R54, 126 to 127 (NE), R152, D154, 165 to 170 (TAYNKS), A189, and Q227.

This sequence belongs to the NAD kinase family. Requires a divalent metal cation as cofactor.

Its subcellular location is the cytoplasm. It carries out the reaction NAD(+) + ATP = ADP + NADP(+) + H(+). In terms of biological role, involved in the regulation of the intracellular balance of NAD and NADP, and is a key enzyme in the biosynthesis of NADP. Catalyzes specifically the phosphorylation on 2'-hydroxyl of the adenosine moiety of NAD to yield NADP. This Lactococcus lactis subsp. lactis (strain IL1403) (Streptococcus lactis) protein is NAD kinase.